A 462-amino-acid chain; its full sequence is MSKLWGGRFTEEAEAWVEEFGASISFDQQLVNQDINGSIAHVTMLAKQGIVTKEEAEKIKIGLQYLLEEAKQNKLHFSVEAEDIHLNIEKMLIEKIGEVGGKLHTGRSRNDQVATDMHLYLKEKVEHIMKATKQLQTVLVHQAENNIETIMPGYTHLQRAQPISFAHHILAYFWMLERDVNRYEDSLKRINISPLGAGALAGTTFPIDREYSAELLGLNGIYENSLDAVSDRDFILEFLSNSSMLMMHLSRFCEELILWSSQEFQFIEMSDQYATGSSIMPQKKNPDMAELIRGKTGRVYGNLFSLLTVMKGLPLAYNKDLQEDKEGMFDTVKTVEGCLHIMAGMLETMTVNKEKMGQAVTQDFSNATEIADYLANKGLPFRQAHEIVGKLVLHCTQKGIYLVDVPLATYKEMSSLFEEDLYEVLSPYAAVKRRNSAGGTGFEQIEKALEKAKGLTKEAIKN.

Belongs to the lyase 1 family. Argininosuccinate lyase subfamily.

Its subcellular location is the cytoplasm. The enzyme catalyses 2-(N(omega)-L-arginino)succinate = fumarate + L-arginine. It participates in amino-acid biosynthesis; L-arginine biosynthesis; L-arginine from L-ornithine and carbamoyl phosphate: step 3/3. The polypeptide is Argininosuccinate lyase (Bacillus cereus (strain AH820)).